Here is a 699-residue protein sequence, read N- to C-terminus: Cysteine--tRNA ligase (699 aa).

The unknown stretch occupies residues 1–226; the sequence is MTTITEKRLT…SEQQRLIHNP (226 aa). Cys-254 serves as a coordination point for Zn(2+). The 'HIGH' region motif lies at 256-266; it reads MTVYDYCHLGH. 3 residues coordinate Zn(2+): Cys-435, His-460, and Glu-464. Positions 508-512 match the 'KMSKS' region motif; sequence KMSKS. Lys-511 contacts ATP.

Belongs to the class-I aminoacyl-tRNA synthetase family. As to quaternary structure, monomer. Zn(2+) is required as a cofactor.

It localises to the cytoplasm. It carries out the reaction tRNA(Cys) + L-cysteine + ATP = L-cysteinyl-tRNA(Cys) + AMP + diphosphate. The protein is Cysteine--tRNA ligase (cysS) of Neisseria meningitidis serogroup A / serotype 4A (strain DSM 15465 / Z2491).